The following is a 360-amino-acid chain: Protein MGF 360-1L (360 aa).

It belongs to the asfivirus MGF 360 family.

In terms of biological role, plays a role in virus cell tropism, and may be required for efficient virus replication in macrophages. In Ornithodoros (relapsing fever ticks), this protein is Protein MGF 360-1L.